A 307-amino-acid chain; its full sequence is Protoheme IX farnesyltransferase (307 aa).

The next 8 membrane-spanning stretches (helical) occupy residues 32-52, 54-74, 105-125, 126-146, 169-189, 222-242, 244-264, and 287-307; these read VVELLLVTTVPTMILAARGIP, LWLVLATVVGGYMSAGSAGAF, LVFAWALGVASVLVLGFFTNW, LAAGLSVAAILIYVVFYTLIL, WAVVTNSVGWAPVILFGVIFL, VVGLQVVLYAWAMVACSLLLI, VARMGVLYTAVALVAGGWFLY, and GSIAYLTLIFLAVAIDPLLPF.

This sequence belongs to the UbiA prenyltransferase family. Protoheme IX farnesyltransferase subfamily.

The protein localises to the cell membrane. The catalysed reaction is heme b + (2E,6E)-farnesyl diphosphate + H2O = Fe(II)-heme o + diphosphate. The protein operates within porphyrin-containing compound metabolism; heme O biosynthesis; heme O from protoheme: step 1/1. In terms of biological role, converts heme B (protoheme IX) to heme O by substitution of the vinyl group on carbon 2 of heme B porphyrin ring with a hydroxyethyl farnesyl side group. This chain is Protoheme IX farnesyltransferase, found in Leifsonia xyli subsp. xyli (strain CTCB07).